The primary structure comprises 73 residues: Translation initiation factor IF-1 (73 aa).

Residues 1–73 form the S1-like domain; that stretch reads MAKKDGVIEL…ARGRIVYRYK (73 aa).

It belongs to the IF-1 family. Component of the 30S ribosomal translation pre-initiation complex which assembles on the 30S ribosome in the order IF-2 and IF-3, IF-1 and N-formylmethionyl-tRNA(fMet); mRNA recruitment can occur at any time during PIC assembly.

Its subcellular location is the cytoplasm. In terms of biological role, one of the essential components for the initiation of protein synthesis. Stabilizes the binding of IF-2 and IF-3 on the 30S subunit to which N-formylmethionyl-tRNA(fMet) subsequently binds. Helps modulate mRNA selection, yielding the 30S pre-initiation complex (PIC). Upon addition of the 50S ribosomal subunit IF-1, IF-2 and IF-3 are released leaving the mature 70S translation initiation complex. The chain is Translation initiation factor IF-1 from Tropheryma whipplei (strain TW08/27) (Whipple's bacillus).